The chain runs to 440 residues: C4-dicarboxylate transport protein (440 aa).

Helical transmembrane passes span 15–35, 46–66, 78–98, 146–166, 190–210, 224–244, 291–311, 332–352, and 354–374; these read VLVA…TGVA, LIKM…IAGM, YALL…LVVV, AFAN…GFAL, IINM…AFTI, LMAC…GGIC, VVGL…SIYL, ITLL…TGSG, and IVLA…LALI. Residues 420-440 are disordered; it reads GAPLVDTRPTDDLGVAEGPAR.

The protein belongs to the dicarboxylate/amino acid:cation symporter (DAACS) (TC 2.A.23) family.

The protein localises to the cell inner membrane. Responsible for the transport of dicarboxylates such as succinate, fumarate, and malate from the periplasm across the membrane. The chain is C4-dicarboxylate transport protein from Pseudomonas putida (strain ATCC 700007 / DSM 6899 / JCM 31910 / BCRC 17059 / LMG 24140 / F1).